We begin with the raw amino-acid sequence, 453 residues long: Cholecystokinin receptor (453 aa).

At 1-64 (MESLRSLSNI…ILDRKKPSPS (64 aa)) the chain is on the extracellular side. 5 N-linked (GlcNAc...) asparagine glycosylation sites follow: N9, N22, N30, N35, and N39. The chain crosses the membrane as a helical span at residues 65-94 (DLNLWVRIVMYSVIFLLSVFGNTLIIIVLV). Residues 95 to 104 (MNKRLRTITN) are Cytoplasmic-facing. The chain crosses the membrane as a helical span at residues 105 to 131 (SFLLSLALSDLMVAVLCMPFTLIPNLM). The Extracellular segment spans residues 132–142 (ENFIFGEVICR). The cysteines at positions 141 and 223 are disulfide-linked. A helical transmembrane segment spans residues 143–164 (AAAYFMGLSVSVSTFNLVAISI). Over 165 to 184 (ERYSAICNPLKSRVWQTRSH) the chain is Cytoplasmic. Residues 185 to 205 (AYRVIAATWVLSSIIMIPYLV) form a helical membrane-spanning segment. Residues 206–237 (YNKTVTFPMKDRRVGHQCRLVWPSKQVQQAWY) are Extracellular-facing. Residues 238–261 (VLLLTILFFIPGVVMIVAYGLISR) traverse the membrane as a helical segment. Topologically, residues 262-343 (ELYRGIQFEM…KLMAKKRVIR (82 aa)) are cytoplasmic. The chain crosses the membrane as a helical span at residues 344–364 (MLIVIVAMFFICWMPIFVANT). Over 365–379 (WKAFDELSAFNTLTG) the chain is Extracellular. Residues 380-403 (APISFIHLLSYTSACVNPLIYCFM) form a helical membrane-spanning segment. The S-palmitoyl cysteine moiety is linked to residue C401. The Cytoplasmic segment spans residues 404 to 453 (NKRFRKAFLGTFSSCIKPCRNFRDTDEDIAATGASLSKFSYTTVSSLGPA).

It belongs to the G-protein coupled receptor 1 family. As to expression, brain and stomach.

It localises to the cell membrane. Its function is as follows. Receptor for cholecystokinin. This receptor mediates its action by association with G proteins that activate a phosphatidylinositol-calcium second messenger system. Has high affinity for CCK-8 and low affinities for gastrin-17-I, CCK-4, and unsulfated CCK-8. This is Cholecystokinin receptor (cckar) from Xenopus laevis (African clawed frog).